The primary structure comprises 449 residues: 23S rRNA (uracil(1939)-C(5))-methyltransferase RlmD (449 aa).

The 59-residue stretch at 12 to 70 (SKQLSAKQSFSVHQLDHLGAGIAQHQGKVVFIPGALPSETVQAQLTEQKKNYARAKLIK) folds into the TRAM domain. Residues Cys-83, Cys-89, Cys-92, and Cys-170 each coordinate [4Fe-4S] cluster. The S-adenosyl-L-methionine site is built by Gln-282, Phe-311, Asn-316, Glu-332, Asp-359, and Asp-379. Catalysis depends on Cys-405, which acts as the Nucleophile.

This sequence belongs to the class I-like SAM-binding methyltransferase superfamily. RNA M5U methyltransferase family. RlmD subfamily.

It catalyses the reaction uridine(1939) in 23S rRNA + S-adenosyl-L-methionine = 5-methyluridine(1939) in 23S rRNA + S-adenosyl-L-homocysteine + H(+). Its function is as follows. Catalyzes the formation of 5-methyl-uridine at position 1939 (m5U1939) in 23S rRNA. This Shewanella sp. (strain MR-7) protein is 23S rRNA (uracil(1939)-C(5))-methyltransferase RlmD.